A 674-amino-acid chain; its full sequence is DNA ligase (674 aa).

NAD(+) is bound by residues 36–40, 85–86, and E116; these read DSVYD and SL. The active-site N6-AMP-lysine intermediate is the K118. NAD(+) is bound by residues R139, E176, K292, and K316. Residues C410, C413, C428, and C433 each contribute to the Zn(2+) site. The region spanning 596–674 is the BRCT domain; the sequence is PSSGNIAGKT…EADLLKFLTN (79 aa).

The protein belongs to the NAD-dependent DNA ligase family. LigA subfamily. The cofactor is Mg(2+). It depends on Mn(2+) as a cofactor.

It catalyses the reaction NAD(+) + (deoxyribonucleotide)n-3'-hydroxyl + 5'-phospho-(deoxyribonucleotide)m = (deoxyribonucleotide)n+m + AMP + beta-nicotinamide D-nucleotide.. In terms of biological role, DNA ligase that catalyzes the formation of phosphodiester linkages between 5'-phosphoryl and 3'-hydroxyl groups in double-stranded DNA using NAD as a coenzyme and as the energy source for the reaction. It is essential for DNA replication and repair of damaged DNA. This is DNA ligase from Rippkaea orientalis (strain PCC 8801 / RF-1) (Cyanothece sp. (strain PCC 8801)).